Here is a 358-residue protein sequence, read N- to C-terminus: Methylthioribose-1-phosphate isomerase (358 aa).

Residues 54 to 56, arginine 96, and glutamine 205 each bind substrate; that span reads RGA. The active-site Proton donor is aspartate 246. Residue 256-257 coordinates substrate; it reads NK.

This sequence belongs to the eIF-2B alpha/beta/delta subunits family. MtnA subfamily.

The enzyme catalyses 5-(methylsulfanyl)-alpha-D-ribose 1-phosphate = 5-(methylsulfanyl)-D-ribulose 1-phosphate. It participates in amino-acid biosynthesis; L-methionine biosynthesis via salvage pathway; L-methionine from S-methyl-5-thio-alpha-D-ribose 1-phosphate: step 1/6. Its function is as follows. Catalyzes the interconversion of methylthioribose-1-phosphate (MTR-1-P) into methylthioribulose-1-phosphate (MTRu-1-P). This chain is Methylthioribose-1-phosphate isomerase, found in Pseudomonas fluorescens (strain Pf0-1).